The chain runs to 232 residues: 2-C-methyl-D-erythritol 4-phosphate cytidylyltransferase (232 aa).

It belongs to the IspD/TarI cytidylyltransferase family. IspD subfamily.

The catalysed reaction is 2-C-methyl-D-erythritol 4-phosphate + CTP + H(+) = 4-CDP-2-C-methyl-D-erythritol + diphosphate. The protein operates within isoprenoid biosynthesis; isopentenyl diphosphate biosynthesis via DXP pathway; isopentenyl diphosphate from 1-deoxy-D-xylulose 5-phosphate: step 2/6. Functionally, catalyzes the formation of 4-diphosphocytidyl-2-C-methyl-D-erythritol from CTP and 2-C-methyl-D-erythritol 4-phosphate (MEP). The protein is 2-C-methyl-D-erythritol 4-phosphate cytidylyltransferase of Nitrosospira multiformis (strain ATCC 25196 / NCIMB 11849 / C 71).